The primary structure comprises 1456 residues: Retrovirus-related Pol polyprotein from transposon RE2 (1456 aa).

Residues 205–252 (NVVTHRNTNTNRNQNNRGDNRNYNNNNNRSNSWQPSSSGSRSDNRQPK) are disordered. Over residues 210 to 245 (RNTNTNRNQNNRGDNRNYNNNNNRSNSWQPSSSGSR) the composition is skewed to low complexity. The CCHC-type zinc finger occupies 257–273 (RCQICSVQGHSAKRCPQ). Low complexity predominate over residues 276 to 291 (QFQSTTNQQQSTSPFT). Residues 276 to 295 (QFQSTTNQQQSTSPFTPWQP) are disordered. Catalysis depends on D313, which acts as the For protease activity. The region spanning 498-661 (TSSKPLEYIY…SPFQKLFGQP (164 aa)) is the Integrase catalytic domain. Residues D509 and D571 each contribute to the Mg(2+) site. Positions 738 to 754 (STSQEQRSDSAPNWPSH) are enriched in polar residues. The disordered stretch occupies residues 738–896 (STSQEQRSDS…PPLPPVLPAP (159 aa)). Residues 793 to 814 (SSSNLPSSSISSPSSSEPTAPS) are compositionally biased toward low complexity. Residues 816–827 (NGPQPTAQPHQT) are compositionally biased toward polar residues. Composition is skewed to low complexity over residues 828-841 (QNSNSNSPILNNPN) and 849-886 (SPNQNSPLPQSPISSPHIPTPSTSISEPNSPSSSSTST). Pro residues predominate over residues 887–896 (PPLPPVLPAP). In terms of domain architecture, Reverse transcriptase Ty1/copia-type spans 965–1208 (NHTWDLVPPP…LTAKPVATPM (244 aa)).

The catalysed reaction is DNA(n) + a 2'-deoxyribonucleoside 5'-triphosphate = DNA(n+1) + diphosphate. The polypeptide is Retrovirus-related Pol polyprotein from transposon RE2 (RE2) (Arabidopsis thaliana (Mouse-ear cress)).